The following is a 398-amino-acid chain: Stearoyl-[acyl-carrier-protein] 9-desaturase, chloroplastic (398 aa).

The N-terminal 34 residues, 1–34 (MALKLHHTAFNPSMAVTSSGLPRSYHLRSHRVFM), are a transit peptide targeting the chloroplast. The tract at residues 46–66 (IPNAKKPHMPPREAHVQKTHS) is disordered. Fe cation is bound by residues Glu140, Glu178, His181, Glu231, Glu264, and His267.

This sequence belongs to the fatty acid desaturase type 2 family. Homodimer. Fe(2+) serves as cofactor.

It is found in the plastid. Its subcellular location is the chloroplast. It catalyses the reaction octadecanoyl-[ACP] + 2 reduced [2Fe-2S]-[ferredoxin] + O2 + 2 H(+) = (9Z)-octadecenoyl-[ACP] + 2 oxidized [2Fe-2S]-[ferredoxin] + 2 H2O. It functions in the pathway lipid metabolism; fatty acid metabolism. Its function is as follows. Converts stearoyl-ACP to oleoyl-ACP by introduction of a cis double bond between carbons 9 and 10 of the acyl chain. This Simmondsia chinensis (Jojoba) protein is Stearoyl-[acyl-carrier-protein] 9-desaturase, chloroplastic.